Here is a 54-residue protein sequence, read N- to C-terminus: Large ribosomal subunit protein bL33A (54 aa).

It belongs to the bacterial ribosomal protein bL33 family.

This Saccharopolyspora erythraea (strain ATCC 11635 / DSM 40517 / JCM 4748 / NBRC 13426 / NCIMB 8594 / NRRL 2338) protein is Large ribosomal subunit protein bL33A.